We begin with the raw amino-acid sequence, 508 residues long: Photosystem II CP47 reaction center protein (508 aa).

Transmembrane regions (helical) follow at residues 21–36, 101–115, 140–156, 203–218, 237–252, and 457–472; these read AVHI…WAGS, IVFS…TWHW, GIHL…FGAF, VAAG…FHLS, VLSS…AFIV, and TFAL…HGAR.

It belongs to the PsbB/PsbC family. PsbB subfamily. PSII is composed of 1 copy each of membrane proteins PsbA, PsbB, PsbC, PsbD, PsbE, PsbF, PsbH, PsbI, PsbJ, PsbK, PsbL, PsbM, PsbT, PsbX, PsbY, PsbZ, Psb30/Ycf12, at least 3 peripheral proteins of the oxygen-evolving complex and a large number of cofactors. It forms dimeric complexes. It depends on Binds multiple chlorophylls. PSII binds additional chlorophylls, carotenoids and specific lipids. as a cofactor.

It is found in the plastid. The protein localises to the chloroplast thylakoid membrane. In terms of biological role, one of the components of the core complex of photosystem II (PSII). It binds chlorophyll and helps catalyze the primary light-induced photochemical processes of PSII. PSII is a light-driven water:plastoquinone oxidoreductase, using light energy to abstract electrons from H(2)O, generating O(2) and a proton gradient subsequently used for ATP formation. In Welwitschia mirabilis (Tree tumbo), this protein is Photosystem II CP47 reaction center protein.